Here is a 418-residue protein sequence, read N- to C-terminus: Tol-Pal system protein TolB (418 aa).

The signal sequence occupies residues 1–21 (MKLFVQLVLFISLFIPYSTKA).

The protein belongs to the TolB family. The Tol-Pal system is composed of five core proteins: the inner membrane proteins TolA, TolQ and TolR, the periplasmic protein TolB and the outer membrane protein Pal. They form a network linking the inner and outer membranes and the peptidoglycan layer.

The protein resides in the periplasm. Functionally, part of the Tol-Pal system, which plays a role in outer membrane invagination during cell division and is important for maintaining outer membrane integrity. The sequence is that of Tol-Pal system protein TolB from Wolbachia pipientis subsp. Culex pipiens (strain wPip).